A 116-amino-acid polypeptide reads, in one-letter code: Chorion protein S15 (116 aa).

The signal sequence occupies residues 1–18 (MKFLIAFAVLALVACINA).

It belongs to the chorion protein S15/S18 family.

Its subcellular location is the secreted. Its function is as follows. Chorion membrane (egg shell) protein; plays a role in protecting the egg from the environment. The sequence is that of Chorion protein S15 (Cp15) from Drosophila virilis (Fruit fly).